A 371-amino-acid polypeptide reads, in one-letter code: Beta-1,3-galactosyltransferase 4 (371 aa).

The Cytoplasmic portion of the chain corresponds to 1 to 4 (MPLS). A helical; Signal-anchor for type II membrane protein transmembrane segment spans residues 5 to 25 (LFRRLLLAVLLLVIIWTLFGP). Topologically, residues 26 to 371 (SGLGEELLSL…RCRFIAWLNS (346 aa)) are lumenal. N-linked (GlcNAc...) asparagine glycosylation occurs at N143. The interval 187-208 (GGPSEQWQKGKEPQEETTAVHK) is disordered. The span at 194–207 (QKGKEPQEETTAVH) shows a compositional bias: basic and acidic residues.

Belongs to the glycosyltransferase 31 family. In terms of tissue distribution, highly expressed in thymus, spleen, kidney and testis and, to a lesser extent, in brain and liver.

It localises to the golgi apparatus membrane. It carries out the reaction a ganglioside GM2 (d18:1(4E)) + UDP-alpha-D-galactose = a ganglioside GM1 (d18:1(4E)) + UDP + H(+). The enzyme catalyses a ganglioside GM2 + UDP-alpha-D-galactose = a ganglioside GM1 + UDP + H(+). The catalysed reaction is a ganglioside GD2 (d18:1(4E)) + UDP-alpha-D-galactose = a ganglioside GD1b (d18:1(4E)) + UDP + H(+). It catalyses the reaction a ganglioside GA2 (d18:1(4E)) + UDP-alpha-D-galactose = a ganglioside GA1 (d18:1(4E)) + UDP + H(+). It functions in the pathway protein modification; protein glycosylation. Its function is as follows. Involved in GM1/GD1B/GA1 ganglioside biosynthesis. This chain is Beta-1,3-galactosyltransferase 4 (B3galt4), found in Rattus norvegicus (Rat).